Consider the following 272-residue polypeptide: Cell division protein FtsQ (272 aa).

Residues 1–43 (MEYNPPNTRERIAARRQRLRQPSSEPAIPGWRRRFIDGLQSGR) lie on the Cytoplasmic side of the membrane. Residues 44–64 (IVSGAVFVVSCLALFYVLFSS) form a helical membrane-spanning segment. The Extracellular segment spans residues 65-272 (QFRVQTVEVV…FYQNRTDGRS (208 aa)). A POTRA domain is found at 66-133 (FRVQTVEVVG…DRARIVIVER (68 aa)).

This sequence belongs to the FtsQ/DivIB family. FtsQ subfamily.

It localises to the cell membrane. Its function is as follows. Essential cell division protein. The polypeptide is Cell division protein FtsQ (Chloroflexus aggregans (strain MD-66 / DSM 9485)).